The following is a 390-amino-acid chain: Alkanesulfonate monooxygenase 1 (390 aa).

The interval 364–390 (TGSSVNTGPFGETIAGDHRPKSLASAS) is disordered.

The protein belongs to the SsuD family.

It catalyses the reaction an alkanesulfonate + FMNH2 + O2 = an aldehyde + FMN + sulfite + H2O + 2 H(+). In terms of biological role, catalyzes the desulfonation of aliphatic sulfonates. In Mesorhizobium japonicum (strain LMG 29417 / CECT 9101 / MAFF 303099) (Mesorhizobium loti (strain MAFF 303099)), this protein is Alkanesulfonate monooxygenase 1 (ssuD1).